A 96-amino-acid polypeptide reads, in one-letter code: Prokineticin Bv8-like peptide 2 (96 aa).

A signal peptide spans 1-19 (MKCFAQIVVLLLVIAFSHG). 5 disulfide bridges follow: Cys-26-Cys-38, Cys-32-Cys-50, Cys-37-Cys-78, Cys-60-Cys-86, and Cys-80-Cys-95.

This sequence belongs to the AVIT (prokineticin) family. Expressed by the skin glands.

The protein localises to the secreted. Potent agonist for both PKR1/PROKR1 and PKR2/PROKR2, and inducer of a potent and long-lasting hyperalgesia. Also potentiates capsaicin-induced TRPV1 current when tested on DRG neurons. At subnanomolar concentrations, this protein both induces potent chemotaxis of macrophages and stimulates LPS-induced production of the pro-inflammatory cytokines IL-1 and IL-12. In vivo, potently stimulates the contraction of the guinea-pig gastrointestinal (GI) smooth muscle (nanomolar concentration) and rabbit aortic rings. The sequence is that of Prokineticin Bv8-like peptide 2 from Bombina maxima (Giant fire-bellied toad).